The chain runs to 663 residues: General transcription and DNA repair factor IIH subunit tcf-29 (663 aa).

BSD domains are found at residues 147-206 (WFED…RAYA) and 227-278 (ENGE…LSKK). 2 disordered regions span residues 452–491 (DSDGRGGIDLHRSIGVDPDSDDEGNNSLDSKSGPKPQHVG) and 513–535 (HLTTTTTHGGSHTTTTNASEERP). Positions 453-465 (SDGRGGIDLHRSI) are enriched in basic and acidic residues. Low complexity predominate over residues 515 to 528 (TTTTTHGGSHTTTT).

Belongs to the TFB1 family. Component of the 7-subunit TFIIH core complex composed of XPB/rad25, XPD/dnr-10, tcf-30/SSL1, tcf-29/TFB1, tcf-11/TFB2, tcf-14/TFB4 and rtf-1/TFB5, which is active in NER. The core complex associates with the 3-subunit CTD-kinase module TFIIK composed of div-66/cyclin H, prk-3/KIN28 and rtf-2/TFB3 to form the 10-subunit holoenzyme (holo-TFIIH) active in transcription.

Its subcellular location is the nucleus. Its function is as follows. Component of the general transcription and DNA repair factor IIH (TFIIH) core complex, which is involved in general and transcription-coupled nucleotide excision repair (NER) of damaged DNA and, when complexed to TFIIK, in RNA transcription by RNA polymerase II. In NER, TFIIH acts by opening DNA around the lesion to allow the excision of the damaged oligonucleotide and its replacement by a new DNA fragment. In transcription, TFIIH has an essential role in transcription initiation. When the pre-initiation complex (PIC) has been established, TFIIH is required for promoter opening and promoter escape. Phosphorylation of the C-terminal tail (CTD) of the largest subunit of RNA polymerase II by the kinase module TFIIK controls the initiation of transcription. This is General transcription and DNA repair factor IIH subunit tcf-29 (tcf-29) from Neurospora crassa (strain ATCC 24698 / 74-OR23-1A / CBS 708.71 / DSM 1257 / FGSC 987).